Here is a 400-residue protein sequence, read N- to C-terminus: Serine/threonine transporter SstT (400 aa).

8 helical membrane passes run 14-34 (IIIA…VTPY), 48-68 (SVAP…FQVG), 76-96 (VLLL…IASL), 136-156 (AISE…GLAM), 177-197 (IIHK…AVTF), 211-231 (LLAV…PILV), 293-313 (LAGA…TLGI), and 334-354 (ASGV…LFGI).

It belongs to the dicarboxylate/amino acid:cation symporter (DAACS) (TC 2.A.23) family.

The protein resides in the cell inner membrane. The enzyme catalyses L-serine(in) + Na(+)(in) = L-serine(out) + Na(+)(out). The catalysed reaction is L-threonine(in) + Na(+)(in) = L-threonine(out) + Na(+)(out). Functionally, involved in the import of serine and threonine into the cell, with the concomitant import of sodium (symport system). The chain is Serine/threonine transporter SstT from Acinetobacter baumannii (strain SDF).